The sequence spans 868 residues: DNA topoisomerase 1 (868 aa).

In terms of domain architecture, Toprim spans 3–148 (KSLVIVESPA…RFSRVVFNEI (146 aa)). Residues E9 and D117 each contribute to the Mg(2+) site. The Topo IA-type catalytic domain occupies 164–581 (NMDRVNAQQT…QFFKDFSSQL (418 aa)). Residues 198 to 203 (SAGRVQ) form an interaction with DNA region. The active-site O-(5'-phospho-DNA)-tyrosine intermediate is the Y325. 3 consecutive C4-type zinc fingers follow at residues 605–636 (CPTC…KERC), 667–694 (CTKC…NPNC), and 716–739 (CDKC…CTNC).

It belongs to the type IA topoisomerase family. In terms of assembly, monomer. Requires Mg(2+) as cofactor.

It carries out the reaction ATP-independent breakage of single-stranded DNA, followed by passage and rejoining.. Releases the supercoiling and torsional tension of DNA, which is introduced during the DNA replication and transcription, by transiently cleaving and rejoining one strand of the DNA duplex. Introduces a single-strand break via transesterification at a target site in duplex DNA. The scissile phosphodiester is attacked by the catalytic tyrosine of the enzyme, resulting in the formation of a DNA-(5'-phosphotyrosyl)-enzyme intermediate and the expulsion of a 3'-OH DNA strand. The free DNA strand then undergoes passage around the unbroken strand, thus removing DNA supercoils. Finally, in the religation step, the DNA 3'-OH attacks the covalent intermediate to expel the active-site tyrosine and restore the DNA phosphodiester backbone. The sequence is that of DNA topoisomerase 1 from Haemophilus influenzae (strain ATCC 51907 / DSM 11121 / KW20 / Rd).